Consider the following 140-residue polypeptide: ATP synthase epsilon chain (140 aa).

Belongs to the ATPase epsilon chain family. F-type ATPases have 2 components, CF(1) - the catalytic core - and CF(0) - the membrane proton channel. CF(1) has five subunits: alpha(3), beta(3), gamma(1), delta(1), epsilon(1). CF(0) has three main subunits: a, b and c.

It is found in the cell inner membrane. Functionally, produces ATP from ADP in the presence of a proton gradient across the membrane. This chain is ATP synthase epsilon chain, found in Xanthomonas oryzae pv. oryzae (strain PXO99A).